The sequence spans 341 residues: HTH-type transcriptional repressor PurR (341 aa).

An HTH lacI-type domain is found at 2-56; it reads ATIKDVAKRANVSTTTVSHVINKTRFVAEETRNAVWAAIKELHYSPSAVARSLKV. The segment at residues 4–23 is a DNA-binding region (H-T-H motif); it reads IKDVAKRANVSTTTVSHVIN. The DNA-binding element occupies 48 to 56; sequence SAVARSLKV. Tyr-73, Arg-190, Thr-192, Phe-221, and Asp-275 together coordinate hypoxanthine.

As to quaternary structure, homodimer.

It functions in the pathway purine metabolism; purine nucleotide biosynthesis [regulation]. Functionally, is the main repressor of the genes involved in the de novo synthesis of purine nucleotides, regulating purB, purC, purEK, purF, purHD, purL, purMN and guaBA expression. PurR is allosterically activated to bind its cognate DNA by binding the purine corepressors, hypoxanthine or guanine, thereby effecting transcription repression. The chain is HTH-type transcriptional repressor PurR from Klebsiella pneumoniae subsp. pneumoniae (strain ATCC 700721 / MGH 78578).